The chain runs to 477 residues: Tripartite motif-containing protein 72 (477 aa).

Zn(2+) is bound by residues L14, Q17, P29, C31, T34, Q37, T53, P56, G86, L89, V97, E100, L105, G108, G114, and K117. The RING-type zinc finger occupies 16 to 59; sequence CQLCLELFRAPVTPECGHTFCQGCLTGVPKNQDQNGSTPCPTCQ. A B box-type zinc finger spans residues 83–124; sequence VPQGHCLEHMDPLSVYCEQDKELICGVCASLGKHKGHNIITA. Residues 135 to 232 adopt a coiled-coil conformation; that stretch reads LPQQQVILQE…QMEGVLKDVE (98 aa). The B30.2/SPRY domain maps to 272–476; the sequence is DEFKFQVWRK…LKIFYPPAEQ (205 aa).

This sequence belongs to the TRIM/RBCC family. Homodimer. Homooligomer; disulfide-linked. Oligomerizes on the phospholipid membrane. In terms of processing, disulfide bond formation at Cys-244 occurs in case of membrane damage that cause the entry of the oxidized milieu of the extracellular space, resulting in homooligomerization.

The protein resides in the cell membrane. It is found in the sarcolemma. It localises to the cytoplasmic vesicle membrane. It carries out the reaction S-ubiquitinyl-[E2 ubiquitin-conjugating enzyme]-L-cysteine + [acceptor protein]-L-lysine = [E2 ubiquitin-conjugating enzyme]-L-cysteine + N(6)-ubiquitinyl-[acceptor protein]-L-lysine.. It functions in the pathway protein modification; protein ubiquitination. With respect to regulation, specifically binds phosphatidylserine. The binding to phospholipids enhances ubiquitination activity. Muscle-specific E3 ubiquitin-protein ligase that plays a central role in cell membrane repair by nucleating the assembly of the repair machinery at injury sites. Acts as a sensor of oxidation: upon membrane damage, entry of extracellular oxidative environment results in disulfide bond formation and homooligomerization at the injury site. This oligomerization acts as a nucleation site for recruitment of TRIM72-containing vesicles to the injury site, leading to membrane patch formation. Probably acts upstream of the Ca(2+)-dependent membrane resealing process. Required for transport of DYSF to sites of cell injury during repair patch formation. Regulates membrane budding and exocytosis. May be involved in the regulation of the mobility of KCNB1-containing endocytic vesicles. In Xenopus laevis (African clawed frog), this protein is Tripartite motif-containing protein 72 (trim72).